A 497-amino-acid chain; its full sequence is NAD(P)H-quinone oxidoreductase chain 4, chloroplastic (497 aa).

The next 13 membrane-spanning stretches (helical) occupy residues 4–24 (LPWLTIIVLLPICAGLLIPLF), 35–55 (YTLGICIIEFLLITYIFCCHF), 87–107 (MGLILLTGFVTTLATLAAWPV), 113–133 (LFHFLMLAMYSGQIGLFASQD), 134–154 (ILLFFFMWELELIPIYLLLSI), 167–187 (FILYTAGGSIFLLIGALTIGL), 207–227 (IALEIIIYSGFLIAYAVKLPI), 242–262 (HYSTCMLLAGILLKMGGYGLI), 274–294 (AIFAPWMVMFGAVQIVYASLI), 313–333 (MGFVMIGIGSLTNIGLNGAIL), 386–406 (LALPGMSGFVAELMVFLGIVI), 416–436 (IVITIIEAIGIILTPIYLLSM), and 462–482 (IFISLCLLLPIIGIGLYPNLV).

It belongs to the complex I subunit 4 family.

Its subcellular location is the plastid. The protein resides in the chloroplast thylakoid membrane. It carries out the reaction a plastoquinone + NADH + (n+1) H(+)(in) = a plastoquinol + NAD(+) + n H(+)(out). The catalysed reaction is a plastoquinone + NADPH + (n+1) H(+)(in) = a plastoquinol + NADP(+) + n H(+)(out). This chain is NAD(P)H-quinone oxidoreductase chain 4, chloroplastic, found in Angiopteris evecta (Mule's foot fern).